The chain runs to 1729 residues: 182 kDa tankyrase-1-binding protein (1729 aa).

Positions 1-12 (MKVSTLRESSAM) are enriched in polar residues. The tract at residues 1–151 (MKVSTLRESS…VRKAPAPFRP (151 aa)) is disordered. A Phosphoserine modification is found at S14. A compositionally biased stretch (low complexity) spans 46–63 (ALPAKPALPAKPSLLVPV). Over residues 117-127 (TGKEEAGKEEP) the composition is skewed to basic and acidic residues. The residue at position 131 (T131) is a Phosphothreonine. 3 positions are modified to phosphoserine: S178, S221, and S228. Disordered stretches follow at residues 184 to 450 (GSRL…LAAL), 484 to 603 (PSGL…ESPL), and 657 to 880 (ETTQ…SSRD). Residues 210–1572 (DEDGSTLFRG…TEILDSAMYR (1363 aa)) are acidic. A compositionally biased stretch (basic and acidic residues) spans 230–245 (AECREEHSKTPEERSL). Residue T239 is modified to Phosphothreonine. S287 and S301 each carry phosphoserine. Residues 352 to 363 (PSPGLPAEGAPE) are compositionally biased toward low complexity. The segment covering 364–374 (APRPSSPPPEV) has biased composition (pro residues). Residues S429, S435, S437, S494, and S498 each carry the phosphoserine modification. Composition is skewed to low complexity over residues 500 to 512 (ITEA…AAEA), 524 to 541 (VSQQ…SGSS), and 572 to 583 (LPTTEGTPGLPL). T501 carries the post-translational modification Phosphothreonine. A phosphoserine mark is found at S601, S672, S691, S695, S712, S724, S744, S762, and S806. The segment covering 738–753 (PQPSSFSPSSWCQGAS) has biased composition (polar residues). The segment covering 803 to 812 (ASSSQDQSKV) has biased composition (polar residues). T833 carries the phosphothreonine modification. Phosphoserine occurs at positions 836, 851, 872, 877, 882, and 893. Positions 858 to 872 (RDAELQDQEFGKRDS) are enriched in basic and acidic residues. Position 897 is a phosphotyrosine (Y897). A disordered region spans residues 897-1083 (YASQDANEQG…ADLEDGEMGK (187 aa)). S899, S920, S936, and S976 each carry phosphoserine. Phosphothreonine is present on T979. Residues S983, S987, S1004, S1008, S1013, S1024, S1029, S1054, S1073, S1091, S1103, S1133, S1138, S1158, S1178, S1248, and S1253 each carry the phosphoserine modification. Residues 1012–1021 (GSRDAGRPGE) are compositionally biased toward basic and acidic residues. A compositionally biased stretch (polar residues) spans 1043–1054 (RDQSSWQNSDAS). The segment at 1240–1302 (EVGEGGGHSQ…GAVCSPGESK (63 aa)) is disordered. T1282 is subject to Phosphothreonine. Phosphoserine is present on residues S1297, S1328, S1331, S1383, and S1385. Positions 1362-1561 (AREHGVGGVS…SPSQDFSFIE (200 aa)) are disordered. Over residues 1389–1400 (EARDPLEARELG) the composition is skewed to basic and acidic residues. Polar residues predominate over residues 1406-1419 (GPETQGEDYSSSSL). Residues S1435, S1439, S1450, S1452, S1473, S1476, S1503, and S1506 each carry the phosphoserine modification. A tankyrase-binding region spans residues 1450 to 1542 (SGSQGLLEEM…SDQGPAQTSR (93 aa)). T1518 carries the phosphothreonine modification. 3 positions are modified to phosphoserine: S1533, S1545, and S1558. Position 1563 is a phosphothreonine (T1563). Positions 1575–1729 (ANLGRKRGHR…QALKLKKKKV (155 aa)) are disordered. Positions 1577-1586 (LGRKRGHRAP) are enriched in basic residues. Positions 1602–1615 (SDAHLFQDSTEPRA) are enriched in basic and acidic residues. Residues S1620, S1621, and S1631 each carry the phosphoserine modification. Residues 1629-1635 (PQSRRTR) carry the Nuclear localization signal motif. K1644 is subject to N6-methyllysine. 3 positions are modified to phosphoserine: S1652, S1666, and S1715. The span at 1665-1679 (RSAEEGELAESKSSQ) shows a compositional bias: basic and acidic residues. The Nuclear localization signal motif lies at 1723-1729 (KLKKKKV).

Binds to the ANK repeat domain of TNKS1 and TNKS2. ADP-ribosylated by TNKS1 (in vitro). In terms of tissue distribution, detected in testis, ovary, lung, skeletal muscle, heart, prostate and pancreas, and at very low levels in brain and peripheral blood leukocytes.

The protein localises to the nucleus. Its subcellular location is the cytoplasm. It localises to the cytoskeleton. The protein resides in the chromosome. The sequence is that of 182 kDa tankyrase-1-binding protein (TNKS1BP1) from Homo sapiens (Human).